The primary structure comprises 83 residues: MALLDFFLSRKKNTANIAKERLQIIVAERRRMDTEPQYLPKLKKEIFQVICKYIKINPEKIKIQLDQTNKNISILELNVTLSE.

It belongs to the MinE family.

Functionally, prevents the cell division inhibition by proteins MinC and MinD at internal division sites while permitting inhibition at polar sites. This ensures cell division at the proper site by restricting the formation of a division septum at the midpoint of the long axis of the cell. This chain is Cell division topological specificity factor, found in Buchnera aphidicola subsp. Baizongia pistaciae (strain Bp).